Consider the following 440-residue polypeptide: tRNA(Ile)-lysidine synthase (440 aa).

An ATP-binding site is contributed by 31-36 (SGGADS).

The protein belongs to the tRNA(Ile)-lysidine synthase family.

It localises to the cytoplasm. The catalysed reaction is cytidine(34) in tRNA(Ile2) + L-lysine + ATP = lysidine(34) in tRNA(Ile2) + AMP + diphosphate + H(+). In terms of biological role, ligates lysine onto the cytidine present at position 34 of the AUA codon-specific tRNA(Ile) that contains the anticodon CAU, in an ATP-dependent manner. Cytidine is converted to lysidine, thus changing the amino acid specificity of the tRNA from methionine to isoleucine. This Borreliella burgdorferi (strain ATCC 35210 / DSM 4680 / CIP 102532 / B31) (Borrelia burgdorferi) protein is tRNA(Ile)-lysidine synthase.